The sequence spans 335 residues: Protein MET1, chloroplastic (335 aa).

The segment covering M1–P18 has biased composition (low complexity). Disordered regions lie at residues M1–L29 and S66–T88. The transit peptide at M1–K73 directs the protein to the chloroplast. Over residues R19–L29 the composition is skewed to polar residues. Residues G78–T88 show a composition bias toward acidic residues. The 40-residue stretch at Y97–S136 folds into the PDZ domain. 3 TPR repeats span residues R217–P250, S254–D287, and K289–I323.

In terms of assembly, interacts directly with stromal loops of photosystem II (PSII) core components psbB (CP47) and psbC (CP43). Associates with PSII subcomplexes formed during the PSII repair cycle (e.g. PSII dimers, PSII monomers, CP43-less PSII monomerand PSII reaction centers). Post-translationally, phosphorylated rapidly (e.g. within 5 minutes) but transiently at threonine and serine residues after wounding. As to expression, expressed in leaves (at protein level). Mostly expressed in leaves, stems and siliques, and, to a lower extent, in flowers and senescent leaves, but not present in roots (at protein level).

It is found in the plastid. The protein resides in the chloroplast membrane. Its subcellular location is the chloroplast thylakoid membrane. Functionally, involved in photosystem II supercomplex formation and repair, probably acting as a psbB/psbC chaperone on the stromal side of the membrane. The chain is Protein MET1, chloroplastic from Arabidopsis thaliana (Mouse-ear cress).